Consider the following 108-residue polypeptide: ATP-dependent Clp protease adapter protein ClpS (108 aa).

The protein belongs to the ClpS family. Binds to the N-terminal domain of the chaperone ClpA.

Involved in the modulation of the specificity of the ClpAP-mediated ATP-dependent protein degradation. The sequence is that of ATP-dependent Clp protease adapter protein ClpS from Leptospira borgpetersenii serovar Hardjo-bovis (strain JB197).